The sequence spans 550 residues: Medium/long-chain-fatty-acid--CoA/3-oxocholest-4-en-26-oate--CoA ligase (550 aa).

Residues 178-186, D419, R434, and K525 each bind ATP; that span reads TGGTTGFPK. The segment at 525-550 is disordered; it reads KPDYRWAKEQTEARPADDVHAAHVSA.

The protein belongs to the ATP-dependent AMP-binding enzyme family.

It catalyses the reaction a medium-chain fatty acid + ATP + CoA = a medium-chain fatty acyl-CoA + AMP + diphosphate. The catalysed reaction is a long-chain fatty acid + ATP + CoA = a long-chain fatty acyl-CoA + AMP + diphosphate. It carries out the reaction (25S)-3-oxocholest-4-en-26-oate + ATP + CoA = (25S)-3-oxocholest-4-en-26-oyl-CoA + AMP + diphosphate. It participates in lipid metabolism; fatty acid biosynthesis. The protein operates within steroid metabolism; cholesterol metabolism. Its function is as follows. Catalyzes the activation of medium/long-chain fatty acids as acyl-coenzyme A (acyl-CoA), which are then transferred to the multifunctional polyketide synthase (PKS) type III for further chain extension. Also involved in the degradation of cholesterol via the degradation of the side chains of C-24 branched-chain sterols. Catalyzes the ATP-dependent CoA thioesterification of the sterol 3-oxocholest-4-en-26-oate to yield 3-oxocholest-4-en-26-oyl-CoA. The protein is Medium/long-chain-fatty-acid--CoA/3-oxocholest-4-en-26-oate--CoA ligase of Mycobacterium marinum (strain ATCC BAA-535 / M).